We begin with the raw amino-acid sequence, 430 residues long: Transcription factor PIF4 (430 aa).

Disordered regions lie at residues 42 to 71, 97 to 136, 160 to 183, 223 to 266, and 405 to 430; these read QTHR…DQET, MDPL…VMPP, TVGP…SHDR, DRKR…NLSE, and SSPA…RLDH. Positions 43 to 60 are enriched in basic and acidic residues; sequence THREQTQTQKQDHHEEAL. The segment covering 61–71 has biased composition (polar residues); sequence RSSTFLEDQET. The span at 126-136 shows a compositional bias: pro residues; it reads CPDPPPQVMPP. Positions 160–175 are enriched in polar residues; sequence TVGPSHCGSNPSQNDL. Positions 244–253 are enriched in low complexity; that stretch reads NKSNQRSGSN. Residues 257–266 are compositionally biased toward basic and acidic residues; it reads RAAEVHNLSE. One can recognise a bHLH domain in the interval 257-306; the sequence is RAAEVHNLSERRRRDRINERMKALQELIPHCSKTDKASILDEAIDYLKSL. A compositionally biased stretch (low complexity) spans 405-419; it reads SSPAGQQSQQPSSVP.

This sequence belongs to the bHLH protein family. As to quaternary structure, interacts preferentially with the Pfr form of phytochrome B (phyB). Binds DNA as a homodimer, but once bound to DNA, loses its capacity to interact with phyB. Interacts with APRR1/TOC1 and PIF3. Binds to RGL2 and RGA. Forms non-functional heterodimer with HFR1. Interacts with PHYB, CRY1 and CRY2 in the nucleus in response to low blue light (LBL). Interacts with FYPP1 and FYPP3. Associates to PTAC12/HMR/PAP5, which acts as a transcriptional coactivator to trigger the thermoresponsive growth-relevant genes and promote warm-temperature-dependent PIF4 accumulation. Interacts with MED14. Mainly expressed in leaves, stems and seedlings, and, to a lower extent, in fruits, flowers and roots.

Its subcellular location is the nucleus. Functionally, transcription factor acting negatively in the phytochrome B signaling pathway. May regulate the expression of a subset of genes involved in cell expansion by binding to the G-box motif. Activated by CRY1 and CRY2 in response to low blue light (LBL) by direct binding at chromatin on E-box variant 5'-CA[CT]GTG-3' to stimulate specific gene expression to adapt global physiology (e.g. hypocotyl elongation in low blue light). Element of a PIF4/HMR/MED14-dependent thermoresponsive process; collaboratively with its transcriptional coactivator PTAC12/HMR/PAP5, involved in the regulation of thermoresponsive growth-relevant genes (e.g. mainly involved in biosynthesis and signaling of the phytohormone auxin) leading to daytime warm temperature elicitation of MED14-dependent thermomorphogenesis (e.g. hypocotyl elongation). This Arabidopsis thaliana (Mouse-ear cress) protein is Transcription factor PIF4.